Consider the following 466-residue polypeptide: D-inositol 3-phosphate glycosyltransferase (466 aa).

Residues 1–12 (MRPMRAGAGAAG) are compositionally biased toward low complexity. The tract at residues 1–22 (MRPMRAGAGAAGESCKDDGVRP) is disordered. Histidine 43 is a binding site for 1D-myo-inositol 3-phosphate. UDP-N-acetyl-alpha-D-glucosamine-binding positions include 49–50 (QP) and glycine 57. Residues 54-59 (DAGGMN), lysine 112, tyrosine 145, threonine 169, and arginine 189 each bind 1D-myo-inositol 3-phosphate. UDP-N-acetyl-alpha-D-glucosamine is bound by residues arginine 263, lysine 268, and glutamine 321. Phenylalanine 330, histidine 331, and valine 333 together coordinate Mg(2+). Glutamate 343 and glutamate 351 together coordinate UDP-N-acetyl-alpha-D-glucosamine. Position 357 (threonine 357) interacts with Mg(2+). The interval 446–466 (VRDPVAARKPRRWTARRGVGA) is disordered.

This sequence belongs to the glycosyltransferase group 1 family. MshA subfamily. Homodimer.

The enzyme catalyses 1D-myo-inositol 3-phosphate + UDP-N-acetyl-alpha-D-glucosamine = 1D-myo-inositol 2-acetamido-2-deoxy-alpha-D-glucopyranoside 3-phosphate + UDP + H(+). Its function is as follows. Catalyzes the transfer of a N-acetyl-glucosamine moiety to 1D-myo-inositol 3-phosphate to produce 1D-myo-inositol 2-acetamido-2-deoxy-glucopyranoside 3-phosphate in the mycothiol biosynthesis pathway. The chain is D-inositol 3-phosphate glycosyltransferase from Mycobacterium marinum (strain ATCC BAA-535 / M).